Consider the following 290-residue polypeptide: Inositol monophosphatase 2 (290 aa).

The Mg(2+) site is built by Glu83, Asp103, Ile105, and Asp106. Substrate is bound at residue Glu83. Substrate contacts are provided by residues 105-108 (IDGT), 207-209 (GSS), Gln226, and Asp233. Asp233 provides a ligand contact to Mg(2+).

The protein belongs to the inositol monophosphatase superfamily. As to quaternary structure, homodimer. Requires Mg(2+) as cofactor. Mostly expressed in brain, small intestine, heart, kidney, and spleen (at protein level).

The protein resides in the cytoplasm. The catalysed reaction is a myo-inositol phosphate + H2O = myo-inositol + phosphate. It catalyses the reaction 1D-myo-inositol 1-phosphate + H2O = myo-inositol + phosphate. The enzyme catalyses 1D-myo-inositol 2-phosphate + H2O = myo-inositol + phosphate. It carries out the reaction 1D-myo-inositol 3-phosphate + H2O = myo-inositol + phosphate. The catalysed reaction is 1D-myo-inositol 4-phosphate + H2O = myo-inositol + phosphate. It catalyses the reaction 1D-myo-inositol 5-phosphate + H2O = myo-inositol + phosphate. The enzyme catalyses 1D-myo-inositol 6-phosphate + H2O = myo-inositol + phosphate. It carries out the reaction alpha-D-glucose 1-phosphate + H2O = D-glucose + phosphate. The catalysed reaction is glycerol 2-phosphate + H2O = glycerol + phosphate. It catalyses the reaction adenosine 2'-phosphate + H2O = adenosine + phosphate. It participates in polyol metabolism; myo-inositol biosynthesis; myo-inositol from D-glucose 6-phosphate: step 2/2. Functionally, phosphatase that can use myo-inositol monophosphates, myo-inositol 1,4-diphosphate, scyllo-inositol-1,4-diphosphate, glucose-1-phosphate, beta-glycerophosphate and 2'-AMP as substrates in vitro. No physiological substrates has been described yet. Has been implicated as the pharmacological target for lithium Li(+) action in brain. The chain is Inositol monophosphatase 2 from Mus musculus (Mouse).